A 297-amino-acid polypeptide reads, in one-letter code: Cytidine deaminase (297 aa).

2 CMP/dCMP-type deaminase domains span residues 54–174 and 192–297; these read SSVE…FGPK and LRGD…YIEV. 95–97 contacts substrate; the sequence is NQE. Zn(2+) is bound at residue histidine 108. The Proton donor role is filled by glutamate 110. The Zn(2+) site is built by cysteine 135 and cysteine 138.

This sequence belongs to the cytidine and deoxycytidylate deaminase family. As to quaternary structure, homodimer. Zn(2+) is required as a cofactor.

The enzyme catalyses cytidine + H2O + H(+) = uridine + NH4(+). It catalyses the reaction 2'-deoxycytidine + H2O + H(+) = 2'-deoxyuridine + NH4(+). Its function is as follows. This enzyme scavenges exogenous and endogenous cytidine and 2'-deoxycytidine for UMP synthesis. In Actinobacillus pleuropneumoniae serotype 5b (strain L20), this protein is Cytidine deaminase.